We begin with the raw amino-acid sequence, 296 residues long: Pre-mRNA-splicing factor CWC23 (296 aa).

One can recognise a J domain in the interval 14-86; the sequence is DLYKLLELNY…AKKAEYDQWV (73 aa).

This sequence belongs to the DnaJ family. Associated with the spliceosome.

The protein localises to the cytoplasm. It localises to the nucleus. Functionally, involved in pre-mRNA splicing. May be involved in endoplasmic reticulum-associated protein degradation (ERAD) and required for growth at low and high temperatures. This chain is Pre-mRNA-splicing factor CWC23 (CWC23), found in Candida glabrata (strain ATCC 2001 / BCRC 20586 / JCM 3761 / NBRC 0622 / NRRL Y-65 / CBS 138) (Yeast).